Reading from the N-terminus, the 119-residue chain is Beta-2-microglobulin (119 aa).

An N-terminal signal peptide occupies residues 1-20 (MARSVVVSLFVLLALAGLEA). Residues 25-114 (PKIQVYSRHP…VTFQTPKTVK (90 aa)) form the Ig-like C1-type domain.

Belongs to the beta-2-microglobulin family. Heterodimer of an alpha chain and a beta chain. Beta-2-microglobulin is the beta-chain of major histocompatibility complex class I molecules.

It localises to the secreted. Functionally, component of the class I major histocompatibility complex (MHC). Involved in the presentation of peptide antigens to the immune system. The protein is Beta-2-microglobulin (B2M) of Brachyteles arachnoides (Southern muriqui).